Reading from the N-terminus, the 391-residue chain is Multidrug resistance protein MdtL (391 aa).

Helical transmembrane passes span 4–24 (FLICSFALVLLYPAGIDMYLV), 42–62 (IAFSVYLAGMAAAMLFAGKVA), 69–89 (PVAIPGAALFIIASVFCSLAE), 93–113 (LFLAGRFLQGLGAGCCYVVAF), 131–151 (LLNGITCIIPVLAPVLGHLIM), 158–178 (SLFWTMATMGIALLMLSLFIL), 203–222 (FFLSRVVITTLSVSVILTFV), 245–265 (ALTAGVSMTVSFSTPFALGIF), 269–289 (TLMITSQVLFLAAGITLAVSP), 293–313 (VSLFGITLICAGFSVGFGVAM), 331–351 (LGIAQVCGSSLWIWLAAVVGI), and 356–376 (MLIGILIACSIVSLLLIMFVA).

It belongs to the major facilitator superfamily. DHA1 family. MdtL (TC 2.A.1.2.22) subfamily.

The protein localises to the cell inner membrane. Functionally, confers resistance to chloramphenicol. This Escherichia coli O45:K1 (strain S88 / ExPEC) protein is Multidrug resistance protein MdtL.